The following is a 413-amino-acid chain: Tryptophan synthase beta chain (413 aa).

An N6-(pyridoxal phosphate)lysine modification is found at Lys107.

It belongs to the TrpB family. In terms of assembly, tetramer of two alpha and two beta chains. Pyridoxal 5'-phosphate serves as cofactor.

It catalyses the reaction (1S,2R)-1-C-(indol-3-yl)glycerol 3-phosphate + L-serine = D-glyceraldehyde 3-phosphate + L-tryptophan + H2O. The protein operates within amino-acid biosynthesis; L-tryptophan biosynthesis; L-tryptophan from chorismate: step 5/5. Its function is as follows. The beta subunit is responsible for the synthesis of L-tryptophan from indole and L-serine. This is Tryptophan synthase beta chain from Trichormus variabilis (strain ATCC 29413 / PCC 7937) (Anabaena variabilis).